Reading from the N-terminus, the 380-residue chain is Histidinol-phosphate aminotransferase (380 aa).

An N6-(pyridoxal phosphate)lysine modification is found at K232.

Belongs to the class-II pyridoxal-phosphate-dependent aminotransferase family. Histidinol-phosphate aminotransferase subfamily. As to quaternary structure, homodimer. It depends on pyridoxal 5'-phosphate as a cofactor.

The catalysed reaction is L-histidinol phosphate + 2-oxoglutarate = 3-(imidazol-4-yl)-2-oxopropyl phosphate + L-glutamate. It participates in amino-acid biosynthesis; L-histidine biosynthesis; L-histidine from 5-phospho-alpha-D-ribose 1-diphosphate: step 7/9. The chain is Histidinol-phosphate aminotransferase from Mycobacterium bovis (strain BCG / Pasteur 1173P2).